A 616-amino-acid polypeptide reads, in one-letter code: Dihydroxy-acid dehydratase (616 aa).

Position 81 (Asp81) interacts with Mg(2+). Cys122 contributes to the [2Fe-2S] cluster binding site. Mg(2+) is bound by residues Asp123 and Lys124. At Lys124 the chain carries N6-carboxylysine. Residue Cys195 coordinates [2Fe-2S] cluster. Glu491 is a Mg(2+) binding site. Ser517 (proton acceptor) is an active-site residue.

This sequence belongs to the IlvD/Edd family. In terms of assembly, homodimer. [2Fe-2S] cluster serves as cofactor. Mg(2+) is required as a cofactor.

The enzyme catalyses (2R)-2,3-dihydroxy-3-methylbutanoate = 3-methyl-2-oxobutanoate + H2O. It carries out the reaction (2R,3R)-2,3-dihydroxy-3-methylpentanoate = (S)-3-methyl-2-oxopentanoate + H2O. Its pathway is amino-acid biosynthesis; L-isoleucine biosynthesis; L-isoleucine from 2-oxobutanoate: step 3/4. It functions in the pathway amino-acid biosynthesis; L-valine biosynthesis; L-valine from pyruvate: step 3/4. In terms of biological role, functions in the biosynthesis of branched-chain amino acids. Catalyzes the dehydration of (2R,3R)-2,3-dihydroxy-3-methylpentanoate (2,3-dihydroxy-3-methylvalerate) into 2-oxo-3-methylpentanoate (2-oxo-3-methylvalerate) and of (2R)-2,3-dihydroxy-3-methylbutanoate (2,3-dihydroxyisovalerate) into 2-oxo-3-methylbutanoate (2-oxoisovalerate), the penultimate precursor to L-isoleucine and L-valine, respectively. The polypeptide is Dihydroxy-acid dehydratase (Escherichia coli O9:H4 (strain HS)).